The sequence spans 155 residues: SsrA-binding protein (155 aa).

The protein belongs to the SmpB family.

It localises to the cytoplasm. In terms of biological role, required for rescue of stalled ribosomes mediated by trans-translation. Binds to transfer-messenger RNA (tmRNA), required for stable association of tmRNA with ribosomes. tmRNA and SmpB together mimic tRNA shape, replacing the anticodon stem-loop with SmpB. tmRNA is encoded by the ssrA gene; the 2 termini fold to resemble tRNA(Ala) and it encodes a 'tag peptide', a short internal open reading frame. During trans-translation Ala-aminoacylated tmRNA acts like a tRNA, entering the A-site of stalled ribosomes, displacing the stalled mRNA. The ribosome then switches to translate the ORF on the tmRNA; the nascent peptide is terminated with the 'tag peptide' encoded by the tmRNA and targeted for degradation. The ribosome is freed to recommence translation, which seems to be the essential function of trans-translation. The polypeptide is SsrA-binding protein (Geobacillus kaustophilus (strain HTA426)).